Reading from the N-terminus, the 886-residue chain is DNA double-strand break repair Rad50 ATPase (886 aa).

ATP-binding positions include 32 to 38 (NGAGKSS) and glutamine 137. Coiled coils occupy residues 181–240 (IRSL…KEIK) and 320–416 (RKKE…GDLN). Residues 391 to 489 (IKDVSDRINQ…EREELEATRN (99 aa)) form the Zinc-hook domain. The Zn(2+) site is built by cysteine 437 and cysteine 440. Coiled coils occupy residues 450 to 657 (AKIR…ISEL) and 682 to 718 (EADK…EESK).

It belongs to the SMC family. RAD50 subfamily. In terms of assembly, homodimer. Forms a heterotetramer composed of two Mre11 subunits and two Rad50 subunits. Interacts with Mre11 and HerA. Requires Zn(2+) as cofactor.

Part of the Rad50/Mre11 complex, which is involved in the early steps of DNA double-strand break (DSB) repair. The complex may facilitate opening of the processed DNA ends to aid in the recruitment of HerA and NurA. Rad50 controls the balance between DNA end bridging and DNA resection via ATP-dependent structural rearrangements of the Rad50/Mre11 complex. This is DNA double-strand break repair Rad50 ATPase from Sulfolobus acidocaldarius (strain ATCC 33909 / DSM 639 / JCM 8929 / NBRC 15157 / NCIMB 11770).